Reading from the N-terminus, the 2525-residue chain is MQSDTNNSPLSWEELRSGAASSDANSSPPEPIAIIGMSCRLSGSAQDPSSLWEMLTSGRTAWTPGPGQRFNMEAFQSSSADTFGMTNTGGGHFLKEDVAAFDAAFFGIHAVEAKAIDPQHRLLLEIAYECFDNSGLNMDSLWGSNTGVYVGQWANDYHEIQTRDIDAPPLYLTTGTGPAISSNRISYFFNLRGPSFTVDTGCSSGFVALHQAVQSLRSGETSQCFVGGVNLMLDPQRFVYQSKLKMFSNEGRSFAFDSRANGYGRGEGCTAVMLKPLSAALRDGDQIRAVIRNSVLNQDGRTAGITVPSPEAQEEAILKAYGDAMLELRADYVEAHGTGTKVGDPKEAGAIAAALARGNSPGAALPIGSIKANIGHTESAAGLAGLIKAVLMLEHGIIPPQANYESPNPDLCLEERGLRVPTQLERRTLRRISVNSFGYGGTNAHVVVDASADALCALSSLGRHTSAQRVFFISGASEKACQRICARLAKYLARKSAWPETDTPELLAKLAYTLSKKSIHPYRLALVAQDINELVQQLISAAYSPVARQDRKGDTRIGLVFSGQGSQYAEMGRELLSSSAVFSRSIDRACQHLTELGSGWNMREELCRPQETTRINEPALSQPLTTAIQLALVDLLFDLKISVSAVVGHSSGEIAAAYAAEAISFEDAMTASYYRGSLTSSLVVGNPECDGAMLAVGADADVVNQRISEVGDAHGRMRIACFNSPSSVTVSGDAKAVNELRKLLVAEGTFNRMLPTNGAAYHSHQMESMNKEYTLSLQKKLSPKKKTSISAARIFSSVTGKENDLQTPLDGVYWAANLLSPVLFSQALREMCEAKYDGKALDMIIEVGPHSQLGGAVKQTVKALKSSSGIAYTSVLKKGKKARQAFLECLGALHVCTATVDLNASNGFSATHAPKLLVDLPPYPFDHERSFWHETRISKDYRHRKHAPHELLGTFAHDTNRVEPRWRQFLSLKQTPWLKSHAVQGQIVFPGAGFLTMAIQAMLQHMHATSPLVKVHSLLLRNVSLSRALVLPADGPDVEITLTLRPESHTAKSSSAVWSEFRIFTVTSESVWTEHCRGLVHAETQAADVDEIAADVKDTLEAGETCVHEVTPQKLYHLGSEIGLDWQHPFNNVSNIRTSRDACVAVARKTVLDSDVGGMGDILHPTVLDSCLFHGLSAVLVLERGSTSTFVPNFIEQLQIFNRTPDSSAELLSTSKLSRDTSTCDVVVQEKGCSPGQAVIFAAKGVHTTTLPGDTGLNEVIDDICHSQDWVTYVDAWTPEHCDRFVQKAVKEVDPERVPDGPRRQFFEWMKIYAETPLDEQTLPPASISADHWAFYEGVKRLGPHLADILVEKTDPLALLTPDNLLGQLYNTERCRRCIVQMAEYCHALGQQSPGLKVLEVGAGTASATLPAIEALNGRGSINAHSYTFTDLSPAFFDPAKERLGSFADAVKFDILDIERCPLEQGFQEAGYDLIIASNVIHATQRIDAVLANIKKLLKPGGKFMLMELTVPTPHYNLLFGVFKGWWAGYDEGRQLSPLIPPSEWVTRLTRAKFSPAELWFQDYPEENGGTISVLIASAPWDVAQVELPAIDVVTTEYSALESGDEAVLRTLSSSEELLNTNISVGCLSDISSKDNIVIILPEVARYLCQSLHGSAWERFKHLVLNARAVLLVGCSSSYCSDFVSGGIWLGFARCLRLELPRLRVITLDLAVERALMMKRLTSVLPTLMRSIKQGLALDGRVEVENEFRESDGQLYVSRLVSNDKMSEYVHRSRQRAQPKLLSFMDPQRPMTAELRVPGLLESIRWKDDVKATAVGPDEVKLELRAASINFKDVLIAAGQLEGINEMRNDCSGVVIEVGSNMCDRFKAGDRVCALYSRSYTNYPVVHGDCCQVVPDSMTYEEATALPVVWTTVYYSLVDAGRLEQGDKILIHSAAGAVGQAAIMLAKHIGAEVFATVGNSEKQTLLRERYGIADDHIFSSRTPAFHDKIKRLTGGYGVDVVLNSLAGDQFRHSCNLVAPFGRFVEIGRKDLMDDARMSMGFLLKNVTFAYVDLSLIMEVKRPLARRLLREVVNLAASGAIRPVTLTTLPITEIETAFRMIQAGKHTGKIVLRVAQDQIVKADPPAPAHAELKPNATYLLVGGFGGLGRAVITWMGSRGAKNILVISRSGSPDKQGQILIKDMEAMGVKVVAEKCDVTAEDEVASLSKLAADRGLPPIRGVIHSAMVLQDSVLEEMTADEWCRALAPKYAGSLNLHRSFGNEVDFFIFMSSAVALRGNVGQSNYAAACSFQDALARYRTAAGLPAFSINVGPVREVGFVSENPQVAAALRKQGLGTISMADLLTLLNYAVVHRNPEESVCSIGMLPRDTDESLTDRRFAHLVRHDVVSQTADAGGVQFADIPRLLDGAAPGAQLLENISQLVLMQLSKLIASPVETLSAAQSLDSYGVDSLVAVELRNWVGAYLQANVPLMVLRGTSSIHELAKIIAKESRRPSTLLWRSTLLYSYPDLDKLQHDMPAQISWPANS.

The segment covering 1–10 has biased composition (polar residues); that stretch reads MQSDTNNSPL. The interval 1–29 is disordered; it reads MQSDTNNSPLSWEELRSGAASSDANSSPP. In terms of domain architecture, Ketosynthase family 3 (KS3) spans 29-450; the sequence is PEPIAIIGMS…GTNAHVVVDA (422 aa). Active-site for beta-ketoacyl synthase activity residues include Cys202, His336, and His376. The malonyl-CoA:ACP transacylase (MAT) domain stretch occupies residues 560–895; it reads VFSGQGSQYA…FLECLGALHV (336 aa). The segment at 949-1087 is N-terminal hotdog fold; that stretch reads HELLGTFAHD…GLVHAETQAA (139 aa). Positions 949–1252 are dehydratase (DH) domain; the sequence is HELLGTFAHD…AKGVHTTTLP (304 aa). Positions 949-1257 constitute a PKS/mFAS DH domain; it reads HELLGTFAHD…TTTLPGDTGL (309 aa). The active-site Proton acceptor; for dehydratase activity is His981. The segment at 1107–1257 is C-terminal hotdog fold; sequence VHEVTPQKLY…TTTLPGDTGL (151 aa). Asp1169 serves as the catalytic Proton donor; for dehydratase activity. Residues 1399 to 1504 form a methyltransferase (CMet) domain region; the sequence is LEVGAGTASA…KKLLKPGGKF (106 aa). The interval 1799-2111 is enoyl reductase (ER) domain; it reads GLLESIRWKD…AGKHTGKIVL (313 aa). The 79-residue stretch at 2411–2489 folds into the Carrier domain; that stretch reads AQLLENISQL…ELAKIIAKES (79 aa). The interval 2411-2489 is ketoreductase (KR) domain; that stretch reads AQLLENISQL…ELAKIIAKES (79 aa). An O-(pantetheine 4'-phosphoryl)serine modification is found at Ser2449.

Its pathway is secondary metabolite biosynthesis. Highly reducing polyketide synthase; part of the gene cluster that mediates the biosynthesis of beauveriolides I and III, cyclodepsipeptides acting as inhibitors of the acyl-CoA:cholesterol acyltransferase. The HR-PKS cm3B initiates the biosynthesis of beauveriolides by iteratively catalyzing the formation of the linear polyketide chain. The ATP-dependent acetyl-CoA ligase cm3D converts the polyketide carboxylic acid to a CoA thioester which id shuttled to the first T domain in the NRPS cm3A by the acetyltransferase cm3C. Cm3A contains 13 domains and assembles the polyketide chain, L-phenylalanine, L-alanine, and D-leucine (or D-allo-isoleucine) to form beauveriolide I (or beauveriolide III). The production of both beauveriolides I and III suggests the substrate adaptability of cm3B, using different amino acids as substrates. The sequence is that of Highly reducing polyketide synthase cm3B from Cordyceps militaris (strain CM01) (Caterpillar fungus).